A 525-amino-acid polypeptide reads, in one-letter code: Nucleolar and spindle-associated protein 1-A (525 aa).

Disordered stretches follow at residues 46–205 (ESKD…LHEA), 248–292 (EKTP…RFSA), 373–397 (TPESEPKQMLPSVKKNEPMATPEKA), and 451–525 (SLSR…VPVQ). Residues 58 to 69 (SSLTDTDELNSS) are compositionally biased toward polar residues. Positions 82-92 (THRRGRGRKPL) are enriched in basic residues. Residues 106–127 (SVGTGTESLASETDNTQDQNCL) are compositionally biased toward polar residues. The segment covering 160–169 (TTEKRQKKAS) has biased composition (basic and acidic residues). The span at 270–285 (PPTTGASPSRTPTNQR) shows a compositional bias: polar residues. Over residues 476–494 (CGSNNNVSVLKNNFKQPHL) the composition is skewed to polar residues. Positions 495 to 514 (QTREDRRKQHEQDRKGKRDQ) are enriched in basic and acidic residues.

Belongs to the NUSAP family. Interacts with DNA. Interacts with microtubules, ipo7, kpna2 and kpnb1. Microtubule stabilization is inhibited by ipo7 and kpna2, while microtubule bundling is inhibited by kpnb1. Active GTP-bound ran causes dissociation of ipo7 and kpnb1.

It localises to the cytoplasm. It is found in the nucleus. Its subcellular location is the cytoskeleton. The protein localises to the spindle. Its function is as follows. Microtubule-associated protein with the capacity to bundle and stabilize microtubules. May associate with chromosomes and promote the organization of meiotic or mitotic spindle microtubules around them. The chain is Nucleolar and spindle-associated protein 1-A (nusap1-a) from Xenopus laevis (African clawed frog).